The primary structure comprises 124 residues: Ribonuclease pancreatic (124 aa).

Positions 7 and 10 each coordinate substrate. Residue His-12 is the Proton acceptor of the active site. 4 disulfides stabilise this stretch: Cys-26-Cys-84, Cys-40-Cys-95, Cys-58-Cys-110, and Cys-65-Cys-72. The N-linked (GlcNAc...) asparagine glycan is linked to Asn-34. Substrate is bound by residues 41–45 (KPVNT), Lys-66, and Arg-85. The Proton donor role is filled by His-119.

This sequence belongs to the pancreatic ribonuclease family. In terms of assembly, monomer. Interacts with and forms tight 1:1 complexes with RNH1. Dimerization of two such complexes may occur. Interaction with RNH1 inhibits this protein. Pancreas.

It localises to the secreted. The catalysed reaction is an [RNA] containing cytidine + H2O = an [RNA]-3'-cytidine-3'-phosphate + a 5'-hydroxy-ribonucleotide-3'-[RNA].. It catalyses the reaction an [RNA] containing uridine + H2O = an [RNA]-3'-uridine-3'-phosphate + a 5'-hydroxy-ribonucleotide-3'-[RNA].. Functionally, endonuclease that catalyzes the cleavage of RNA on the 3' side of pyrimidine nucleotides. Acts on single-stranded and double-stranded RNA. The sequence is that of Ribonuclease pancreatic (RNASE1) from Eudorcas thomsonii (Thomson's gazelle).